The following is a 351-amino-acid chain: dTDP-glucose 4,6-dehydratase (351 aa).

Residues 12–13 (FI), 32–35 (DALT), 58–59 (DI), 80–84 (FAAES), and Thr99 each bind NAD(+). Ser84 contributes to the substrate binding site. Residue Thr133 participates in substrate binding. Residue Asp134 is the Proton donor of the active site. Catalysis depends on proton acceptor residues Glu135 and Tyr158. NAD(+) is bound at residue 158–162 (YSASK). Residue Asn187 participates in substrate binding. Residue Asn188 coordinates NAD(+). Substrate is bound by residues 197–198 (KL), 213–215 (PVY), Arg222, Asn257, and 289–293 (DRPGH).

The protein belongs to the NAD(P)-dependent epimerase/dehydratase family. dTDP-glucose dehydratase subfamily. Homodimer. It depends on NAD(+) as a cofactor.

The catalysed reaction is dTDP-alpha-D-glucose = dTDP-4-dehydro-6-deoxy-alpha-D-glucose + H2O. It functions in the pathway carbohydrate biosynthesis; dTDP-L-rhamnose biosynthesis. It participates in bacterial outer membrane biogenesis; LPS O-antigen biosynthesis. Its function is as follows. Catalyzes the dehydration of dTDP-D-glucose to form dTDP-6-deoxy-D-xylo-4-hexulose via a three-step process involving oxidation, dehydration and reduction. This is dTDP-glucose 4,6-dehydratase (rfbB) from Xanthomonas campestris pv. campestris (strain ATCC 33913 / DSM 3586 / NCPPB 528 / LMG 568 / P 25).